The primary structure comprises 113 residues: UPF0482 protein YnfB (113 aa).

The first 28 residues, 1 to 28 (MKITLSKRIDLLAFLLPCALALSTTVHA), serve as a signal peptide directing secretion.

The protein belongs to the UPF0482 family.

In Escherichia coli O157:H7, this protein is UPF0482 protein YnfB.